A 225-amino-acid chain; its full sequence is Transcriptional regulatory protein AfsQ1 (225 aa).

The 114-residue stretch at 3–116 (SLLLIEDDDA…VLDARIRAVL (114 aa)) folds into the Response regulatory domain. Aspartate 52 carries the post-translational modification 4-aspartylphosphate. Residues 124–223 (TDSASFGSLV…VRGVGYRLDP (100 aa)) constitute a DNA-binding region (ompR/PhoB-type).

In terms of processing, phosphorylated by AfsQ2.

The protein resides in the cytoplasm. It localises to the nucleoid. Its function is as follows. Forms part of a two-component regulatory system AfsQ1/AfsQ2 involved in secondary metabolism. This chain is Transcriptional regulatory protein AfsQ1, found in Streptomyces coelicolor (strain ATCC BAA-471 / A3(2) / M145).